Here is a 256-residue protein sequence, read N- to C-terminus: MSDVARILKEARDQGRLTALDFAKEIFDDFIELHGDRNFRDDGAVIGGIGRLNGQAVTVVGIQKGKNLQDNLNRNFGQPHPEGYRKALRLMKQAEKFGRSVVTFINTAGAYPGVGAEERGQGEAIARNLMEMSDLKVPIIAIIIGEGGSGGALALAVADKVWMLENTIYSILSPEGFATILWKDGSRSEEAAELMKITSGELLNMGIVDKVIPERGYFTSEIIEAIKTAIVDELAELSQLSTEDLLEARYQRFRKY.

Residues 1-236 (MSDVARILKE…KTAIVDELAE (236 aa)) enclose the CoA carboxyltransferase C-terminal domain.

The protein belongs to the AccA family. In terms of assembly, acetyl-CoA carboxylase is a heterohexamer composed of biotin carboxyl carrier protein (AccB), biotin carboxylase (AccC) and two subunits each of ACCase subunit alpha (AccA) and ACCase subunit beta (AccD).

The protein localises to the cytoplasm. It carries out the reaction N(6)-carboxybiotinyl-L-lysyl-[protein] + acetyl-CoA = N(6)-biotinyl-L-lysyl-[protein] + malonyl-CoA. Its pathway is lipid metabolism; malonyl-CoA biosynthesis; malonyl-CoA from acetyl-CoA: step 1/1. In terms of biological role, component of the acetyl coenzyme A carboxylase (ACC) complex. First, biotin carboxylase catalyzes the carboxylation of biotin on its carrier protein (BCCP) and then the CO(2) group is transferred by the carboxyltransferase to acetyl-CoA to form malonyl-CoA. This is Acetyl-coenzyme A carboxylase carboxyl transferase subunit alpha from Streptococcus thermophilus (strain ATCC BAA-250 / LMG 18311).